The following is a 486-amino-acid chain: Coronin-1B (486 aa).

Residue serine 2 is modified to Phosphoserine; by PKC. WD repeat units follow at residues 80 to 120 (GHTG…LTSP), 130 to 170 (GHTK…ELYR), 174 to 213 (LHPD…LVAE), 217 to 260 (AHEG…EPMA), and 265 to 305 (DSSN…PYIH). Residues 404 to 444 (LKVSRRNVLSDSRPTSAARPAAPAPAAPAPAAAASSSLSGA) form a disordered region. Low complexity predominate over residues 432 to 444 (APAAAASSSLSGA). Residues 446–484 (EAGKLEEVMRELRALRALVKEQGERIGRLEEQLGRVENG) are a coiled coil.

Belongs to the WD repeat coronin family. In terms of assembly, forms homooligomers, but does not form complexes with the other coronins. Interacts with Arp2/3 complex components, including ACTR2, ARPC1B and ARPC2. Binds actin. Post-translationally, phosphorylated in vivo by PKC in response to cholinergic stimulation. Phosphorylation on Ser-2 regulates the interaction with the Arp2/3 complex and cell motility in fibroblasts. Phosphorylation does not seem to affect subcellular location.

The protein localises to the cytoplasm. It is found in the cytoskeleton. Its subcellular location is the stress fiber. Functionally, regulates leading edge dynamics and cell motility in fibroblasts. May be involved in cytokinesis and signal transduction. This Oryctolagus cuniculus (Rabbit) protein is Coronin-1B (CORO1B).